We begin with the raw amino-acid sequence, 1357 residues long: DNA-directed RNA polymerase subunit beta (1357 aa).

This sequence belongs to the RNA polymerase beta chain family. The RNAP catalytic core consists of 2 alpha, 1 beta, 1 beta' and 1 omega subunit. When a sigma factor is associated with the core the holoenzyme is formed, which can initiate transcription.

It catalyses the reaction RNA(n) + a ribonucleoside 5'-triphosphate = RNA(n+1) + diphosphate. Its function is as follows. DNA-dependent RNA polymerase catalyzes the transcription of DNA into RNA using the four ribonucleoside triphosphates as substrates. The sequence is that of DNA-directed RNA polymerase subunit beta from Hahella chejuensis (strain KCTC 2396).